A 341-amino-acid polypeptide reads, in one-letter code: Nicotinate-nucleotide--dimethylbenzimidazole phosphoribosyltransferase (341 aa).

Glutamate 306 (proton acceptor) is an active-site residue.

It belongs to the CobT family.

It catalyses the reaction 5,6-dimethylbenzimidazole + nicotinate beta-D-ribonucleotide = alpha-ribazole 5'-phosphate + nicotinate + H(+). It participates in nucleoside biosynthesis; alpha-ribazole biosynthesis; alpha-ribazole from 5,6-dimethylbenzimidazole: step 1/2. Catalyzes the synthesis of alpha-ribazole-5'-phosphate from nicotinate mononucleotide (NAMN) and 5,6-dimethylbenzimidazole (DMB). In Methylocella silvestris (strain DSM 15510 / CIP 108128 / LMG 27833 / NCIMB 13906 / BL2), this protein is Nicotinate-nucleotide--dimethylbenzimidazole phosphoribosyltransferase.